The primary structure comprises 448 residues: C4-dicarboxylate transport protein 2 (448 aa).

9 consecutive transmembrane segments (helical) span residues 13 to 33, 49 to 69, 81 to 101, 149 to 169, 193 to 213, 227 to 247, 294 to 314, 335 to 355, and 357 to 377; these read SLYVQVLAAVTIGVLLGHFSP, LIKMIIAPIIFCTVVIGIAGM, LALLYFEVMSTLALVIGLIVV, AFAKGEILQVLLFSVLFGFAL, IVGIIMKVAPIGAFGAMAFTI, LMGAFYLTCLIFVFVVLGIVS, VVGLVIPTGYSFNLDGTSIYL, ITLLAVLMLTSKGAAGITGSG, and IVLAATLSAVGGVPVAGLALI.

The protein belongs to the dicarboxylate/amino acid:cation symporter (DAACS) (TC 2.A.23) family.

Its subcellular location is the cell inner membrane. Its function is as follows. Responsible for the transport of dicarboxylates such as succinate, fumarate, and malate from the periplasm across the membrane. This is C4-dicarboxylate transport protein 2 from Polaromonas naphthalenivorans (strain CJ2).